Here is a 303-residue protein sequence, read N- to C-terminus: Regulatory protein PocR (303 aa).

An HTH araC/xylS-type domain is found at 195–293 (KKALRYIDAH…QVTPQAYRQQ (99 aa)). 2 DNA-binding regions (H-T-H motif) span residues 212-233 (EDVA…KKYQ) and 260-283 (IASI…RQTY).

It functions in the pathway cofactor biosynthesis; adenosylcobalamin biosynthesis [regulation]. Its pathway is polyol metabolism; 1,2-propanediol degradation [regulation]. Functionally, positive regulatory protein of pdu and cob operons. Positively autoregulates its own expression. The chain is Regulatory protein PocR (pocR) from Salmonella typhimurium (strain LT2 / SGSC1412 / ATCC 700720).